A 355-amino-acid polypeptide reads, in one-letter code: Alanine racemase (355 aa).

The active-site Proton acceptor; specific for D-alanine is lysine 34. Lysine 34 carries the post-translational modification N6-(pyridoxal phosphate)lysine. Arginine 133 is a binding site for substrate. Tyrosine 249 functions as the Proton acceptor; specific for L-alanine in the catalytic mechanism. Residue methionine 297 coordinates substrate.

This sequence belongs to the alanine racemase family. Pyridoxal 5'-phosphate serves as cofactor.

The enzyme catalyses L-alanine = D-alanine. Its pathway is amino-acid biosynthesis; D-alanine biosynthesis; D-alanine from L-alanine: step 1/1. In terms of biological role, catalyzes the interconversion of L-alanine and D-alanine. May also act on other amino acids. In Rickettsia canadensis (strain McKiel), this protein is Alanine racemase (alr).